Consider the following 659-residue polypeptide: MIQIGKIFAGRYRIVKQIGRGGMADVYLAKDLILDGEEVAVKVLRTNYQTDPIAVARFQREARAMADLDHPHIVRITDIGEEDGQQYLAMEYVAGLDLKRYIKEHYPLSNEEAVRIMRQILLAMRLAHTRGIVHRDLKPQNILLTPDGTAKVTDFGIAVAFAETSLTQTNSMLGSVHYLSPEQARGSKATVQSDIYAMGIIFYEMLTGHIPYDGDSAVTIALQHFQNPLPSVIAENSSVPQALENVIIKATAKKLTNRYRSVSEMYVDLSSSLSYNRRNESKLIFDETSKADTKTLPKVSQSTLTSIPKVQAQTEHKSIKNPSQAVTEETYQPQAPKKHRFKMRYLILLASLVLVAASLIWILSRSPATIAIPDVAGQTVAEAKATLKKANFEIGEEKTEASEKVEEGRIIRTDPGAGTGRKEGTKINLVVSSGKQSFQISNYVGRKSSDVIAELKEKKVPDNLIKIEEEESNESEAGTVLKQSLPEGTTYDLSKATQIVLTVAKKATTIQLGNYIGRNSTEVISELKQKKVPENLIKIEEEESSESEPGTIMKQSPGAGTTYDVSKPTQIVLTVAKKVTSVAMPSYIGSSLEFTKNNLIQIVGIKEANIEVVEVTTAPAGSVEGMVVEQSPRAGEKVDLNKTRVKISIYKPKTTSATP.

The Cytoplasmic segment spans residues 1 to 342; it reads MIQIGKIFAG…PQAPKKHRFK (342 aa). One can recognise a Protein kinase domain in the interval 12–273; the sequence is YRIVKQIGRG…EMYVDLSSSL (262 aa). Residues 18-26 and Lys-42 contribute to the ATP site; that span reads IGRGGMADV. Residue Asp-136 is the Proton acceptor of the active site. The chain crosses the membrane as a helical span at residues 343 to 363; it reads MRYLILLASLVLVAASLIWIL. Residues 364–659 lie on the Periplasmic side of the membrane; that stretch reads SRSPATIAIP…YKPKTTSATP (296 aa). PASTA domains follow at residues 366-433, 434-505, 506-577, and 578-651; these read SPAT…VVSS, GKQS…TVAK, KATT…TVAK, and KVTS…SIYK. Positions 541–561 are disordered; that stretch reads EEESSESEPGTIMKQSPGAGT.

This sequence belongs to the protein kinase superfamily. Ser/Thr protein kinase family. As to quaternary structure, homodimer. StkP forms dimers through its transmembrane and extracellular domains. Dimer formation likely promotes autophosphorylation activity and might be necessary for targeting StkP substrate. Interacts with PhpP via its kinase domain. In terms of processing, autophosphorylation occurs predominantly on threonine residue(s) and weakly on serine residue(s). Dephosphorylated by PhpP.

It is found in the cell membrane. The enzyme catalyses L-seryl-[protein] + ATP = O-phospho-L-seryl-[protein] + ADP + H(+). It catalyses the reaction L-threonyl-[protein] + ATP = O-phospho-L-threonyl-[protein] + ADP + H(+). Its activity is regulated as follows. StkP is activated continuously during growth and its activity is inhibited upon growth arrest. Inhibited by staurosporine, a known protein kinase inhibitor. Protein kinase involved in signal transduction pathways that regulate various cellular processes. Likely senses intracellular peptidoglycan subunits present in the cell division septa of actively growing cells; thus, intracellular unlinked peptidoglycan may serve as the signal molecules that trigger StkP phosphorylation activity on a set of substrates. Plays a crucial role in the regulation of cell shape and cell division of S.pneumoniae through control of at least DivIVA activity. Is involved in competence triggering, via the transduction of signals culminating directly or indirectly in ComD activation. Is important for the resistance of S.pneumoniae to various environmental stress conditions. Appears to be a global regulator that positively controls the transcription of a set of genes encoding functions involved in cell wall metabolism, pyrimidine biosynthesis, DNA repair, iron uptake, and oxidative stress response, and that seems to down-regulate genes employed in competence. Since StkP is unlikely to directly regulate transcription, the input signal must be transmitted through an effector molecule. Identified target substrates that are specifically phosphorylated by StkP in vivo, mainly on threonine residues, are DivIVA, GlmM, PpaC, MapZ, KhpB (also called EloR/Jag) and StkP itself. Autophosphorylated StkP is a substrate for the cotranscribed protein phosphatase PhpP; PhpP and StkP appear to constitute a functional signaling couple in vivo. The protein is Serine/threonine-protein kinase StkP (stkP) of Streptococcus pneumoniae.